A 210-amino-acid polypeptide reads, in one-letter code: 23 kDa jasmonate-induced protein (210 aa).

Belongs to the jasmonate-induced protein family.

This chain is 23 kDa jasmonate-induced protein, found in Hordeum vulgare (Barley).